Here is a 317-residue protein sequence, read N- to C-terminus: Tumor-associated calcium signal transducer 2 (317 aa).

Positions 1–24 (MARGLDLAPLLLLLLAMVAGFCTA) are cleaved as a signal peptide. Topologically, residues 25-270 (QINCTCPTNK…QFSMKRLTTG (246 aa)) are extracellular. N-linked (GlcNAc...) asparagine glycosylation is present at Asn27. One can recognise a Thyroglobulin type-1 domain in the interval 64 to 139 (TSKCLLLKAR…TDKGDQSLRC (76 aa)). Disulfide bonds link Cys67–Cys102, Cys113–Cys119, and Cys121–Cys139. Asn114 carries N-linked (GlcNAc...) asparagine glycosylation. N-linked (GlcNAc...) asparagine glycosylation is found at Asn162 and Asn202. The chain crosses the membrane as a helical span at residues 271 to 291 (LIAVIAVVAVALVAGVVVLVV). Over 292-317 (TNRRKSGKYKKVELKELGEMRSEPSL) the chain is Cytoplasmic.

It belongs to the EPCAM family.

It localises to the membrane. Functionally, may function as a growth factor receptor. This is Tumor-associated calcium signal transducer 2 (Tacstd2) from Rattus norvegicus (Rat).